Consider the following 194-residue polypeptide: 7-methyl-GTP pyrophosphatase (194 aa).

D71 acts as the Proton acceptor in catalysis.

The protein belongs to the Maf family. YceF subfamily. Requires a divalent metal cation as cofactor.

The protein localises to the cytoplasm. The enzyme catalyses N(7)-methyl-GTP + H2O = N(7)-methyl-GMP + diphosphate + H(+). In terms of biological role, nucleoside triphosphate pyrophosphatase that hydrolyzes 7-methyl-GTP (m(7)GTP). May have a dual role in cell division arrest and in preventing the incorporation of modified nucleotides into cellular nucleic acids. The polypeptide is 7-methyl-GTP pyrophosphatase (Aromatoleum aromaticum (strain DSM 19018 / LMG 30748 / EbN1) (Azoarcus sp. (strain EbN1))).